The primary structure comprises 208 residues: Ribosomal RNA small subunit methyltransferase G (208 aa).

S-adenosyl-L-methionine contacts are provided by residues glycine 76, leucine 81, 127-128 (VE), and arginine 142.

Belongs to the methyltransferase superfamily. RNA methyltransferase RsmG family.

The protein localises to the cytoplasm. The catalysed reaction is guanosine(527) in 16S rRNA + S-adenosyl-L-methionine = N(7)-methylguanosine(527) in 16S rRNA + S-adenosyl-L-homocysteine. Its function is as follows. Specifically methylates the N7 position of guanine in position 527 of 16S rRNA. This is Ribosomal RNA small subunit methyltransferase G from Legionella pneumophila (strain Lens).